We begin with the raw amino-acid sequence, 321 residues long: uncharacterized protein (321 aa).

9 helical membrane-spanning segments follow: residues 12–32, 52–72, 86–106, 109–129, 136–156, 168–188, 214–234, 254–274, and 292–312; these read IGVEFIIFSVYAVFSISWAAT, LITSMIVVAKIFGASFTAFLV, ILMSSGIFLSFVDSYSGILII, LTGLGSACALVCLVPIAQQWF, FVISFNITSNLVGITLGLVLA, DSLSFYAWINLILLILWLFVG, WGMIIFYIGPILFLNSLFTFL, KEIPALANFAIIFGPYLGLFF, and IFICGFCMLFLQNLVLIQIFA.

It is found in the cell membrane. This is an uncharacterized protein from Campylobacter jejuni subsp. jejuni serotype O:2 (strain ATCC 700819 / NCTC 11168).